The sequence spans 396 residues: 8-amino-7-oxononanoate synthase (396 aa).

Substrate is bound at residue Arg-19. Position 106 to 107 (106 to 107) interacts with pyridoxal 5'-phosphate; sequence GY. Substrate is bound at residue His-131. Pyridoxal 5'-phosphate contacts are provided by Ser-176, His-204, and Thr-233. Lys-236 carries the N6-(pyridoxal phosphate)lysine modification. Residue Thr-350 participates in substrate binding.

Belongs to the class-II pyridoxal-phosphate-dependent aminotransferase family. BioF subfamily. As to quaternary structure, homodimer. It depends on pyridoxal 5'-phosphate as a cofactor.

The catalysed reaction is 6-carboxyhexanoyl-[ACP] + L-alanine + H(+) = (8S)-8-amino-7-oxononanoate + holo-[ACP] + CO2. The protein operates within cofactor biosynthesis; biotin biosynthesis. Catalyzes the decarboxylative condensation of pimeloyl-[acyl-carrier protein] and L-alanine to produce 8-amino-7-oxononanoate (AON), [acyl-carrier protein], and carbon dioxide. This chain is 8-amino-7-oxononanoate synthase, found in Pseudomonas savastanoi pv. phaseolicola (strain 1448A / Race 6) (Pseudomonas syringae pv. phaseolicola (strain 1448A / Race 6)).